Reading from the N-terminus, the 669-residue chain is DNA polymerase epsilon subunit B (669 aa).

Residues 96-115 (QISTRNGSADNLAKKAERSD) form a disordered region.

This sequence belongs to the DNA polymerase epsilon subunit B family. In terms of assembly, heterotetramer. Consists of four subunits: POL2, DPB2, DPB3 and DPB4.

It localises to the nucleus. Its function is as follows. As accessory component of the DNA polymerase epsilon (DNA polymerase II) participates in chromosomal DNA replication. The sequence is that of DNA polymerase epsilon subunit B (DPB2) from Debaryomyces hansenii (strain ATCC 36239 / CBS 767 / BCRC 21394 / JCM 1990 / NBRC 0083 / IGC 2968) (Yeast).